A 1107-amino-acid chain; its full sequence is Rho GTPase-activating protein 45 (1107 aa).

The segment at 1-99 is disordered; the sequence is MFSRKKRELM…SPPESGEGPF (99 aa). Residues 37-55 show a composition bias toward low complexity; the sequence is DSSNDLASSPPSNSSPVSS. Residues 56–66 are compositionally biased toward polar residues; that stretch reads GTLKRPSSLSR. Coiled coils occupy residues 103–132 and 363–485; these read EDIS…EELK and NMRR…QSDQ. In terms of domain architecture, F-BAR spans 261–524; that stretch reads EDVDVILQRS…SSKLYDLGQQ (264 aa). Composition is skewed to basic and acidic residues over residues 414–423, 434–444, and 573–588; these read NATRAEEEQS, RRAEEEAKNRA, and ENKE…ERRG. 2 disordered regions span residues 414-444 and 564-595; these read NATR…KNRA and FNSQ…HQVH. The Phorbol-ester/DAG-type zinc finger occupies 671–716; sequence THRLRKLRTPSKCRECNSYVYFQGAECEECSLACHKKCLETLAIQC. Residues 730–942 enclose the Rho-GAP domain; that stretch reads RDFSETALRS…TLIIFYSTIF (213 aa). The disordered stretch occupies residues 981 to 1036; the sequence is LTPEYQIPVFKEPGASTVESDSESDGAEDIPGTWKPQTTRGHLTKEASVTSAEDIP. Residues 1015–1031 are compositionally biased toward polar residues; that stretch reads KPQTTRGHLTKEASVTS.

Its subcellular location is the cytoplasm. The protein localises to the cell projection. The protein resides in the ruffle membrane. Functionally, contains a GTPase activator for the Rho-type GTPases (RhoGAP) domain that would be able to negatively regulate the actin cytoskeleton as well as cell spreading. However, also contains N-terminally a BAR-domin which is able to play an autoinhibitory effect on this RhoGAP activity. The polypeptide is Rho GTPase-activating protein 45 (Xenopus laevis (African clawed frog)).